Here is a 315-residue protein sequence, read N- to C-terminus: Tyrosine recombinase XerC (315 aa).

A Core-binding (CB) domain is found at 13 to 104 (ADLAAAREEW…GVRSLLRHLE (92 aa)). The region spanning 125 to 309 (SLPKPLTADD…DTQRLLEVYD (185 aa)) is the Tyr recombinase domain. Residues Arg-168, Lys-193, His-261, Arg-264, and His-287 contribute to the active site. Catalysis depends on Tyr-296, which acts as the O-(3'-phospho-DNA)-tyrosine intermediate.

This sequence belongs to the 'phage' integrase family. XerC subfamily. As to quaternary structure, forms a cyclic heterotetrameric complex composed of two molecules of XerC and two molecules of XerD.

Its subcellular location is the cytoplasm. Functionally, site-specific tyrosine recombinase, which acts by catalyzing the cutting and rejoining of the recombining DNA molecules. The XerC-XerD complex is essential to convert dimers of the bacterial chromosome into monomers to permit their segregation at cell division. It also contributes to the segregational stability of plasmids. The chain is Tyrosine recombinase XerC from Brucella melitensis biotype 1 (strain ATCC 23456 / CCUG 17765 / NCTC 10094 / 16M).